A 504-amino-acid chain; its full sequence is Glucose-6-phosphate isomerase (504 aa).

Glutamate 333 (proton donor) is an active-site residue. Residues histidine 364 and lysine 473 contribute to the active site.

It belongs to the GPI family.

The protein localises to the cytoplasm. It catalyses the reaction alpha-D-glucose 6-phosphate = beta-D-fructose 6-phosphate. Its pathway is carbohydrate biosynthesis; gluconeogenesis. It participates in carbohydrate degradation; glycolysis; D-glyceraldehyde 3-phosphate and glycerone phosphate from D-glucose: step 2/4. Its function is as follows. Catalyzes the reversible isomerization of glucose-6-phosphate to fructose-6-phosphate. The sequence is that of Glucose-6-phosphate isomerase from Xanthomonas oryzae pv. oryzae (strain MAFF 311018).